Reading from the N-terminus, the 97-residue chain is Nucleoid-associated protein HPAG1_0033 (97 aa).

This sequence belongs to the YbaB/EbfC family. In terms of assembly, homodimer.

Its subcellular location is the cytoplasm. It localises to the nucleoid. Binds to DNA and alters its conformation. May be involved in regulation of gene expression, nucleoid organization and DNA protection. The chain is Nucleoid-associated protein HPAG1_0033 from Helicobacter pylori (strain HPAG1).